Here is an 84-residue protein sequence, read N- to C-terminus: Putative membrane protein insertion efficiency factor (84 aa).

The disordered stretch occupies residues 61-84 (SQGFEDPLPPNTKRTNLTHGRQTK). Residues 72-84 (TKRTNLTHGRQTK) are compositionally biased toward polar residues.

Belongs to the UPF0161 family.

It localises to the cell inner membrane. Its function is as follows. Could be involved in insertion of integral membrane proteins into the membrane. This Leptospira borgpetersenii serovar Hardjo-bovis (strain JB197) protein is Putative membrane protein insertion efficiency factor.